The chain runs to 37 residues: ATP synthase subunit O, mitochondrial (37 aa).

This sequence belongs to the ATPase delta chain family. F-type ATPases have 2 components, CF(1) - the catalytic core - and CF(0) - the membrane proton channel. CF(1) has five subunits: alpha(3), beta(3), gamma(1), delta(1), epsilon(1). CF(0) has three main subunits: a, b and c.

It localises to the mitochondrion. The protein localises to the mitochondrion inner membrane. Its function is as follows. Mitochondrial membrane ATP synthase (F(1)F(0) ATP synthase or Complex V) produces ATP from ADP in the presence of a proton gradient across the membrane which is generated by electron transport complexes of the respiratory chain. F-type ATPases consist of two structural domains, F(1) - containing the extramembraneous catalytic core and F(0) - containing the membrane proton channel, linked together by a central stalk and a peripheral stalk. During catalysis, ATP synthesis in the catalytic domain of F(1) is coupled via a rotary mechanism of the central stalk subunits to proton translocation. Part of the complex F(0) domain and the peripheric stalk, which acts as a stator to hold the catalytic alpha(3)beta(3) subcomplex and subunit a/ATP6 static relative to the rotary elements. The sequence is that of ATP synthase subunit O, mitochondrial from Solanum tuberosum (Potato).